Reading from the N-terminus, the 214-residue chain is Protein PsaE (214 aa).

Positions 1–24 are cleaved as a signal peptide; that stretch reads MSHCVVLNKLESVLIIGDSRYALS. The segment at residues 1–94 is a DNA-binding region (ompR/PhoB-type); that stretch reads MSHCVVLNKL…YKNEGYSYQK (94 aa).

Required for expression of pH 6 antigen. This chain is Protein PsaE (psaE), found in Yersinia pseudotuberculosis serotype I (strain IP32953).